Here is a 458-residue protein sequence, read N- to C-terminus: Bifunctional protein GlmU (458 aa).

The pyrophosphorylase stretch occupies residues 1-230; sequence MHKRTAVVLA…EREILGINSR (230 aa). UDP-N-acetyl-alpha-D-glucosamine-binding positions include 9–12, Lys23, Gln73, and 78–79; these read LAAG and GT. Asp103 lines the Mg(2+) pocket. UDP-N-acetyl-alpha-D-glucosamine contacts are provided by Gly140, Glu155, Asn170, and Asn228. Asn228 is a Mg(2+) binding site. Residues 231–251 are linker; sequence VQLAEAEAVLQDRLRRKWMDA. Positions 252 to 458 are N-acetyltransferase; the sequence is GVTLIDPPSV…FLGRKHKGSQ (207 aa). The UDP-N-acetyl-alpha-D-glucosamine site is built by Arg333 and Lys351. His363 serves as the catalytic Proton acceptor. Tyr366 and Asn377 together coordinate UDP-N-acetyl-alpha-D-glucosamine. Acetyl-CoA-binding positions include Ala380, 386–387, Ser405, Ala423, and Arg440; that span reads NY.

The protein in the N-terminal section; belongs to the N-acetylglucosamine-1-phosphate uridyltransferase family. It in the C-terminal section; belongs to the transferase hexapeptide repeat family. As to quaternary structure, homotrimer. Requires Mg(2+) as cofactor.

The protein resides in the cytoplasm. It catalyses the reaction alpha-D-glucosamine 1-phosphate + acetyl-CoA = N-acetyl-alpha-D-glucosamine 1-phosphate + CoA + H(+). The catalysed reaction is N-acetyl-alpha-D-glucosamine 1-phosphate + UTP + H(+) = UDP-N-acetyl-alpha-D-glucosamine + diphosphate. Its pathway is nucleotide-sugar biosynthesis; UDP-N-acetyl-alpha-D-glucosamine biosynthesis; N-acetyl-alpha-D-glucosamine 1-phosphate from alpha-D-glucosamine 6-phosphate (route II): step 2/2. It functions in the pathway nucleotide-sugar biosynthesis; UDP-N-acetyl-alpha-D-glucosamine biosynthesis; UDP-N-acetyl-alpha-D-glucosamine from N-acetyl-alpha-D-glucosamine 1-phosphate: step 1/1. The protein operates within bacterial outer membrane biogenesis; LPS lipid A biosynthesis. In terms of biological role, catalyzes the last two sequential reactions in the de novo biosynthetic pathway for UDP-N-acetylglucosamine (UDP-GlcNAc). The C-terminal domain catalyzes the transfer of acetyl group from acetyl coenzyme A to glucosamine-1-phosphate (GlcN-1-P) to produce N-acetylglucosamine-1-phosphate (GlcNAc-1-P), which is converted into UDP-GlcNAc by the transfer of uridine 5-monophosphate (from uridine 5-triphosphate), a reaction catalyzed by the N-terminal domain. In Heliobacterium modesticaldum (strain ATCC 51547 / Ice1), this protein is Bifunctional protein GlmU.